The sequence spans 155 residues: Ribosomal RNA large subunit methyltransferase H (155 aa).

S-adenosyl-L-methionine is bound by residues Leu-72, Gly-103, and 122 to 127 (LSDLTL).

The protein belongs to the RNA methyltransferase RlmH family. In terms of assembly, homodimer.

The protein localises to the cytoplasm. The catalysed reaction is pseudouridine(1915) in 23S rRNA + S-adenosyl-L-methionine = N(3)-methylpseudouridine(1915) in 23S rRNA + S-adenosyl-L-homocysteine + H(+). In terms of biological role, specifically methylates the pseudouridine at position 1915 (m3Psi1915) in 23S rRNA. The protein is Ribosomal RNA large subunit methyltransferase H of Paracidovorax citrulli (strain AAC00-1) (Acidovorax citrulli).